We begin with the raw amino-acid sequence, 356 residues long: MTTGRMSRRECLSAAVMVPIAAMTATATITGSAQAAKNNMNGSTIGKITKFSPRLDAILDVSTPIEVIASDIQWSEGPVWVKNGNFLLFSDPPANIMRKWTPDAGVSIFLKPSGHAEPIPAGQFREPGSNGMKVGPDGKIWVADSGTRAIMKVDPVTRQRSVVVDNYKGKRFNSPNDLFFSKSGAVYFTDPPYGLTNLDESDIKEMNYNGVFRLSPDGRLDLIEAGLSRPNGLALSPDETKLYVSNSDRASPNIWVYSLDSNGLPTSRTLLRNFRKEYFDQGLAGLPDGMNIDKQGNLFASAPGGIYIFAPDGECLGLISGNPGQPLSNCCFGEKGQTLFISASHNVVRVRTKTFG.

Positions 1-35 (MTTGRMSRRECLSAAVMVPIAAMTATATITGSAQA) form a signal peptide, tat-type signal.

As to quaternary structure, homodimer. Predicted to be exported by the Tat system. The position of the signal peptide cleavage has been experimentally proven.

It localises to the periplasm. The enzyme catalyses D-glucono-1,5-lactone + H2O = D-gluconate + H(+). Its pathway is carbohydrate acid metabolism; D-gluconate biosynthesis; D-gluconate from D-glucono-1,5-lactone: step 1/1. Functionally, hydrolyzes the gluconolactone formed by glucose-fructose oxidoreductase, and that formed in aerobic conditions by the glucose dehydrogenase present. The chain is Gluconolactonase (gnl) from Zymomonas mobilis subsp. mobilis (strain ATCC 31821 / ZM4 / CP4).